Reading from the N-terminus, the 373-residue chain is 3-dehydroquinate synthase (373 aa).

NAD(+) contacts are provided by residues 67–72 (EGEQAK), 101–105 (GVVLD), 125–126 (TT), lysine 138, and lysine 147. The Zn(2+) site is built by glutamate 180, histidine 240, and histidine 256.

It belongs to the sugar phosphate cyclases superfamily. Dehydroquinate synthase family. NAD(+) serves as cofactor. Co(2+) is required as a cofactor. It depends on Zn(2+) as a cofactor.

Its subcellular location is the cytoplasm. It carries out the reaction 7-phospho-2-dehydro-3-deoxy-D-arabino-heptonate = 3-dehydroquinate + phosphate. Its pathway is metabolic intermediate biosynthesis; chorismate biosynthesis; chorismate from D-erythrose 4-phosphate and phosphoenolpyruvate: step 2/7. In terms of biological role, catalyzes the conversion of 3-deoxy-D-arabino-heptulosonate 7-phosphate (DAHP) to dehydroquinate (DHQ). The sequence is that of 3-dehydroquinate synthase (aroB) from Chlamydia muridarum (strain MoPn / Nigg).